The chain runs to 709 residues: Leucine-rich repeat-containing protein 4B (709 aa).

Residues 1-38 form the signal peptide; the sequence is MAQAHIRGSPCPLLPPGRMSWPHGALLLLWLFSPPLRA. One can recognise an LRRNT domain in the interval 50–88; the sequence is GGGSPPATSCPAACSCSNQASRVICTRRELAEVPASIPV. LRR repeat units lie at residues 89–110, 113–134, 137–158, 161–182, 185–207, 210–231, 232–253, 256–277, and 280–301; these read NTRY…TFKH, HLEI…AFNG, SLNT…AFEY, KLRE…AFNR, SLRR…AFEG, NLRY…TALV, RLEE…SFQG, SLRK…AFDD, and SLEE…LFTP. The N-linked (GlcNAc...) asparagine glycan is linked to Asn-226. Asn-285, Asn-335, Asn-376, Asn-402, Asn-424, Asn-427, Asn-446, and Asn-454 each carry an N-linked (GlcNAc...) asparagine glycan. The LRRCT domain maps to 313 to 365; sequence NPWHCNCDVLWLSWWLKETVPSNTTCCARCHAPAGLKGRYIGELDQSHFTCYA. One can recognise an Ig-like C2-type domain in the interval 366-454; the sequence is PVIVEPPTDL…GNTTASATLN (89 aa). An intrachain disulfide couples Cys-387 to Cys-438. The interval 496-552 is disordered; sequence TQPGEEAQQPRGTEKEPPGPTTDGAWGGGRPDAAAPASASTTAPAPRSSRPTEKAFT. A compositionally biased stretch (low complexity) spans 528–544; that stretch reads AAAPASASTTAPAPRSS. Residues 575-595 form a helical membrane-spanning segment; that stretch reads IIIGCFVAITFMAAVMLVAFY. Ser-689 is modified (phosphoserine).

As to quaternary structure, interacts with PTPRF. Interacts with DLG4. N-glycosylated. O-glycosylated; contains sialic acid.

The protein localises to the membrane. Its subcellular location is the presynaptic cell membrane. Functionally, synaptic adhesion protein. Regulates the formation of excitatory synapses. The trans-synaptic adhesion between LRRC4B and PTPRF regulates the formation of excitatory synapses in a bidirectional manner. This Mus musculus (Mouse) protein is Leucine-rich repeat-containing protein 4B (Lrrc4b).